Reading from the N-terminus, the 337-residue chain is Ketol-acid reductoisomerase (NADP(+)) (337 aa).

The KARI N-terminal Rossmann domain occupies 3–183 (VEMFYDDDAD…GGARAGVIKT (181 aa)). NADP(+) contacts are provided by residues 26–29 (YGSQ), K49, S52, S54, and 84–87 (DTAQ). Residue H109 is part of the active site. G135 provides a ligand contact to NADP(+). The 146-residue stretch at 184–329 (TFKEETETDL…KKLRDLMSWV (146 aa)) folds into the KARI C-terminal knotted domain. The Mg(2+) site is built by D192, E196, E228, and E232. A substrate-binding site is contributed by S253.

This sequence belongs to the ketol-acid reductoisomerase family. Mg(2+) serves as cofactor.

The catalysed reaction is (2R)-2,3-dihydroxy-3-methylbutanoate + NADP(+) = (2S)-2-acetolactate + NADPH + H(+). The enzyme catalyses (2R,3R)-2,3-dihydroxy-3-methylpentanoate + NADP(+) = (S)-2-ethyl-2-hydroxy-3-oxobutanoate + NADPH + H(+). It functions in the pathway amino-acid biosynthesis; L-isoleucine biosynthesis; L-isoleucine from 2-oxobutanoate: step 2/4. Its pathway is amino-acid biosynthesis; L-valine biosynthesis; L-valine from pyruvate: step 2/4. Involved in the biosynthesis of branched-chain amino acids (BCAA). Catalyzes an alkyl-migration followed by a ketol-acid reduction of (S)-2-acetolactate (S2AL) to yield (R)-2,3-dihydroxy-isovalerate. In the isomerase reaction, S2AL is rearranged via a Mg-dependent methyl migration to produce 3-hydroxy-3-methyl-2-ketobutyrate (HMKB). In the reductase reaction, this 2-ketoacid undergoes a metal-dependent reduction by NADPH to yield (R)-2,3-dihydroxy-isovalerate. The chain is Ketol-acid reductoisomerase (NADP(+)) from Mycolicibacterium smegmatis (strain ATCC 700084 / mc(2)155) (Mycobacterium smegmatis).